The sequence spans 492 residues: Lipopolysaccharide biosynthesis protein WzxC (492 aa).

Over 1 to 12 (MSLREKTISGAK) the chain is Cytoplasmic. The chain crosses the membrane as a helical span at residues 13 to 33 (WSAIATVIIIGLGLVQMTVLA). At 34 to 42 (RIIDNHQFG) the chain is on the periplasmic side. Residues 43 to 63 (LLTVSLVIIALADTLSDFGIA) traverse the membrane as a helical segment. Topologically, residues 64–81 (NSIIQRKEISHLELTTLY) are cytoplasmic. Residues 82 to 102 (WLNVGLGIVVCVAVFLLSDLI) traverse the membrane as a helical segment. Residues 103 to 104 (GD) lie on the Periplasmic side of the membrane. A helical membrane pass occupies residues 105–125 (VLNNPDLAPLIKTLSLAFVVI). The Cytoplasmic portion of the chain corresponds to 126–157 (PHGQQFRALMQKELEFNKIGMIETSAVLAGFT). A helical membrane pass occupies residues 158–178 (CTVVSAHFWPLAMTAILGYLV). The Periplasmic segment spans residues 179-236 (NSAVRTLLFGYFGRKIYRPGLHFSLASVAPNLRFGAWLTADSIINYLNTNLSTLVLAR). Residues 237–257 (ILGAGVAGGYNLAYNVAVVPP) form a helical membrane-spanning segment. At 258 to 288 (MKLNPIITRVLFPAFAKIQDDTEKLRVNFYK) the chain is on the cytoplasmic side. A helical membrane pass occupies residues 289-309 (LLSVVGIINFPALLGLMVVSN). The Periplasmic portion of the chain corresponds to 310–322 (NFVPLVFGEKWNS). A helical membrane pass occupies residues 323–343 (IIPVLQLLCVVGLLRSVGNPI). At 344-364 (GSLLMAKARVDISFKFNVFKT) the chain is on the cytoplasmic side. The helical transmembrane segment at 365–385 (FLFIPAIVIGGQMAGAIGVTL) threads the bilayer. Residue Gly386 is a topological domain, periplasmic. Residues 387–407 (FLLVQIINTILSYFVMIKPVL) traverse the membrane as a helical segment. Residues 408 to 417 (GSSYRQYILS) lie on the Cytoplasmic side of the membrane. The chain crosses the membrane as a helical span at residues 418 to 438 (LWLPFYLSLPTLVVSYALGIV). The Periplasmic portion of the chain corresponds to 439–445 (LKGQLAL). A helical transmembrane segment spans residues 446-466 (GMLLAVQIATGVLAFVVMIVL). Residues 467–492 (SRHPLVVEVKRQFCRSEKMKMLLRAG) are Cytoplasmic-facing.

It belongs to the polysaccharide synthase family.

It is found in the cell inner membrane. It functions in the pathway bacterial outer membrane biogenesis; lipopolysaccharide biosynthesis. In Escherichia coli (strain K12), this protein is Lipopolysaccharide biosynthesis protein WzxC (wzxC).